The sequence spans 91 residues: Uteroglobin (91 aa).

Residues 1-21 form the signal peptide; the sequence is MKLTIAIVLVTLTLFCRPAST.

The protein belongs to the secretoglobin family. As to quaternary structure, antiparallel homodimer; disulfide-linked. Interaction with LMBR1L is controversial.

The protein resides in the secreted. Its function is as follows. Binds phosphatidylcholine, phosphatidylinositol, polychlorinated biphenyls (PCB) and weakly progesterone, potent inhibitor of phospholipase A2. This is Uteroglobin (SCGB1A1) from Bos taurus (Bovine).